Reading from the N-terminus, the 180-residue chain is MSLETLKTLIPDYAKDIRLNIGSLANETILSEQQKYGCYLASAHAVGEAQTLRAIEAEARGKLSVEALNAAKAASAIMGMNNVYYRATHLVSNTTYTTMPARLRMNVIGNPGVEKVDFELWSLAVSAINGCGMCLDAHEAELRKHGVTSEQIQAAIRIGAVVNAAARVLAAEAALAAEPA.

The active-site Proton donor is Cys-131. A disulfide bridge links Cys-131 with Cys-134. Residue Cys-134 is the Cysteine sulfenic acid (-SOH) intermediate of the active site.

Belongs to the AhpD family.

The enzyme catalyses N(6)-[(R)-dihydrolipoyl]-L-lysyl-[lipoyl-carrier protein] + a hydroperoxide = N(6)-[(R)-lipoyl]-L-lysyl-[lipoyl-carrier protein] + an alcohol + H2O. In terms of biological role, antioxidant protein with alkyl hydroperoxidase activity. Required for the reduction of the AhpC active site cysteine residues and for the regeneration of the AhpC enzyme activity. The protein is Alkyl hydroperoxide reductase AhpD of Hyphomonas neptunium (strain ATCC 15444).